Here is a 205-residue protein sequence, read N- to C-terminus: ATP-dependent Clp protease proteolytic subunit 2 (205 aa).

Serine 100 (nucleophile) is an active-site residue. The active site involves histidine 125.

It belongs to the peptidase S14 family. As to quaternary structure, fourteen ClpP subunits assemble into 2 heptameric rings which stack back to back to give a disk-like structure with a central cavity, resembling the structure of eukaryotic proteasomes.

Its subcellular location is the cytoplasm. The enzyme catalyses Hydrolysis of proteins to small peptides in the presence of ATP and magnesium. alpha-casein is the usual test substrate. In the absence of ATP, only oligopeptides shorter than five residues are hydrolyzed (such as succinyl-Leu-Tyr-|-NHMec, and Leu-Tyr-Leu-|-Tyr-Trp, in which cleavage of the -Tyr-|-Leu- and -Tyr-|-Trp bonds also occurs).. Cleaves peptides in various proteins in a process that requires ATP hydrolysis. Has a chymotrypsin-like activity. Plays a major role in the degradation of misfolded proteins. In Chlamydia abortus (strain DSM 27085 / S26/3) (Chlamydophila abortus), this protein is ATP-dependent Clp protease proteolytic subunit 2.